We begin with the raw amino-acid sequence, 285 residues long: Small ribosomal subunit protein uS5x (285 aa).

Residues 1 to 19 are compositionally biased toward basic and acidic residues; that stretch reads MAERGGERGVERGGERGDF. Residues 1–51 form a disordered region; the sequence is MAERGGERGVERGGERGDFGRGFGGRGGRGDRGGRGRGGRGGRRGGRASEE. The span at 35 to 46 shows a compositional bias: basic residues; it reads RGRGGRGGRRGG. The region spanning 96–159 is the S5 DRBM domain; sequence LKDEVMKIMP…ILAKLSVVPV (64 aa).

It belongs to the universal ribosomal protein uS5 family. Interacts with MBD6.

Component of the ribosome, a large ribonucleoprotein complex responsible for the synthesis of proteins in the cell. The small ribosomal subunit (SSU) binds messenger RNAs (mRNAs) and translates the encoded message by selecting cognate aminoacyl-transfer RNA (tRNA) molecules. The large subunit (LSU) contains the ribosomal catalytic site termed the peptidyl transferase center (PTC), which catalyzes the formation of peptide bonds, thereby polymerizing the amino acids delivered by tRNAs into a polypeptide chain. The nascent polypeptides leave the ribosome through a tunnel in the LSU and interact with protein factors that function in enzymatic processing, targeting, and the membrane insertion of nascent chains at the exit of the ribosomal tunnel. Plays a role in the assembly and function of the 40S ribosomal subunit. Mutations in this protein affects the control of translational fidelity. Involved in nucleolar processing of pre-18S ribosomal RNA and ribosome assembly. Also involved in RNA-directed DNA methylation (RdDM). The chain is Small ribosomal subunit protein uS5x from Arabidopsis thaliana (Mouse-ear cress).